Here is a 359-residue protein sequence, read N- to C-terminus: MSYRRELEKYRDLDEDEILGALTEEELRTLENELDELDPDNALLPAGLRQKDQTTKAPTGPFKREELLDHLEKQAKEFKDREDLVPYTGEKRGKVWVPKQKPMDPVLESVTLEPELEEALANASDAELCDIAAILGMHTLMSNQQYYQALGSSSIVNKEGLNSVIKPTQYKPVPDEEPNSTDVEETLERIKNNDPELEEVNLNNIRNIPIPTLKAYAEALKENSYVKKFSIVGTRSNDPVAFALAEMLKVNKVLKTLNVESNFISGAGILRLVEALPHNTSLVELKIDNQSQPLGNKVEMEIVNMLEKNTTLLKFGYHFTQQGPRLRASNAMMSNNDLVRKRRLADLTGPIIPKCRSGV.

The disordered stretch occupies residues 36-61; the sequence is ELDPDNALLPAGLRQKDQTTKAPTGP. Positions 39–138 are tropomyosin-binding; it reads PDNALLPAGL…CDIAAILGMH (100 aa).

The protein belongs to the tropomodulin family. Binds to the N-terminus of tropomyosin and to actin. Interacts with FLII. As to expression, highly expressed in the erythrocyte, heart and skeletal muscle.

Its subcellular location is the cytoplasm. It is found in the cytoskeleton. Blocks the elongation and depolymerization of the actin filaments at the pointed end. The Tmod/TM complex contributes to the formation of the short actin protofilament, which in turn defines the geometry of the membrane skeleton. The polypeptide is Tropomodulin-1 (Tmod1) (Mus musculus (Mouse)).